The sequence spans 365 residues: tRNA (guanine(6)-N2)-methyltransferase (365 aa).

The region spanning 69–182 (NENSRLLHRV…KDVFFLGIDT (114 aa)) is the THUMP domain. S-adenosyl-L-methionine contacts are provided by residues 198–202 (HPAHL), 228–230 (SGT), Glu248, 276–277 (DA), and Asn293.

It belongs to the methyltransferase superfamily. In terms of assembly, monomer in solution.

The protein resides in the cytoplasm. It carries out the reaction guanosine(6) in tRNA + S-adenosyl-L-methionine = N(2)-methylguanosine(6) in tRNA + S-adenosyl-L-homocysteine + H(+). Its function is as follows. S-adenosyl-L-methionine-dependent methyltransferase that catalyzes the methylation of the guanosine nucleotide at position 6 (m2G6) in tRNA(Phe). The sequence is that of tRNA (guanine(6)-N2)-methyltransferase from Pyrococcus furiosus (strain ATCC 43587 / DSM 3638 / JCM 8422 / Vc1).